Here is a 259-residue protein sequence, read N- to C-terminus: Ribosomal RNA small subunit methyltransferase A (259 aa).

The S-adenosyl-L-methionine site is built by Asn15, Leu17, Gly41, Glu62, Asp86, and Asn105.

This sequence belongs to the class I-like SAM-binding methyltransferase superfamily. rRNA adenine N(6)-methyltransferase family. RsmA subfamily.

Its subcellular location is the cytoplasm. The catalysed reaction is adenosine(1518)/adenosine(1519) in 16S rRNA + 4 S-adenosyl-L-methionine = N(6)-dimethyladenosine(1518)/N(6)-dimethyladenosine(1519) in 16S rRNA + 4 S-adenosyl-L-homocysteine + 4 H(+). Its function is as follows. Specifically dimethylates two adjacent adenosines (A1518 and A1519) in the loop of a conserved hairpin near the 3'-end of 16S rRNA in the 30S particle. May play a critical role in biogenesis of 30S subunits. The sequence is that of Ribosomal RNA small subunit methyltransferase A from Mycoplasmopsis synoviae (strain 53) (Mycoplasma synoviae).